A 210-amino-acid chain; its full sequence is Proteasome subunit beta (210 aa).

Residues 1–9 constitute a propeptide, removed in mature form; by autocatalysis; it reads MNDKNTLKG. T10 (nucleophile) is an active-site residue.

Belongs to the peptidase T1B family. The 20S proteasome core is composed of 14 alpha and 14 beta subunits that assemble into four stacked heptameric rings, resulting in a barrel-shaped structure. The two inner rings, each composed of seven catalytic beta subunits, are sandwiched by two outer rings, each composed of seven alpha subunits. The catalytic chamber with the active sites is on the inside of the barrel. Has a gated structure, the ends of the cylinder being occluded by the N-termini of the alpha-subunits. Is capped at one or both ends by the proteasome regulatory ATPase, PAN.

It localises to the cytoplasm. It catalyses the reaction Cleavage of peptide bonds with very broad specificity.. The formation of the proteasomal ATPase PAN-20S proteasome complex, via the docking of the C-termini of PAN into the intersubunit pockets in the alpha-rings, triggers opening of the gate for substrate entry. Interconversion between the open-gate and close-gate conformations leads to a dynamic regulation of the 20S proteasome proteolysis activity. In terms of biological role, component of the proteasome core, a large protease complex with broad specificity involved in protein degradation. The polypeptide is Proteasome subunit beta (Methanothermobacter thermautotrophicus (strain ATCC 29096 / DSM 1053 / JCM 10044 / NBRC 100330 / Delta H) (Methanobacterium thermoautotrophicum)).